We begin with the raw amino-acid sequence, 205 residues long: Holliday junction branch migration complex subunit RuvA (205 aa).

Residues M1 to N67 form a domain I region. The interval T68–V146 is domain II. The tract at residues A147–Y150 is flexible linker. Residues Y150–A205 form a domain III region.

This sequence belongs to the RuvA family. In terms of assembly, homotetramer. Forms an RuvA(8)-RuvB(12)-Holliday junction (HJ) complex. HJ DNA is sandwiched between 2 RuvA tetramers; dsDNA enters through RuvA and exits via RuvB. An RuvB hexamer assembles on each DNA strand where it exits the tetramer. Each RuvB hexamer is contacted by two RuvA subunits (via domain III) on 2 adjacent RuvB subunits; this complex drives branch migration. In the full resolvosome a probable DNA-RuvA(4)-RuvB(12)-RuvC(2) complex forms which resolves the HJ.

The protein localises to the cytoplasm. In terms of biological role, the RuvA-RuvB-RuvC complex processes Holliday junction (HJ) DNA during genetic recombination and DNA repair, while the RuvA-RuvB complex plays an important role in the rescue of blocked DNA replication forks via replication fork reversal (RFR). RuvA specifically binds to HJ cruciform DNA, conferring on it an open structure. The RuvB hexamer acts as an ATP-dependent pump, pulling dsDNA into and through the RuvAB complex. HJ branch migration allows RuvC to scan DNA until it finds its consensus sequence, where it cleaves and resolves the cruciform DNA. This Mycoplasma genitalium (strain ATCC 33530 / DSM 19775 / NCTC 10195 / G37) (Mycoplasmoides genitalium) protein is Holliday junction branch migration complex subunit RuvA.